Consider the following 82-residue polypeptide: Small ribosomal subunit protein bS16 (82 aa).

Belongs to the bacterial ribosomal protein bS16 family.

In Cyanothece sp. (strain PCC 7425 / ATCC 29141), this protein is Small ribosomal subunit protein bS16.